A 1876-amino-acid chain; its full sequence is Phenolphthiocerol/phthiocerol polyketide synthase subunit A (1876 aa).

The residue at position 2 (Thr-2) is an N-acetylthreonine. The Carrier 1 domain maps to 9 to 83 (ADLRHWLIDY…ALAAYLAAPE (75 aa)). At Ser-43 the chain carries O-(pantetheine 4'-phosphoryl)serine. A Ketosynthase family 3 (KS3) domain is found at 101 to 526 (DEPIAVVGMG…GTNAHVVIEQ (426 aa)). Active-site for beta-ketoacyl synthase activity residues include Cys-273, His-408, and His-448. The interval 626 to 950 (SPGPGTVFVY…NLNKAHTIHP (325 aa)) is acyltransferase. The active-site For malonyltransferase activity is Ser-720. Positions 997–1112 (HTTVATVSAS…AQLSSSPSDS (116 aa)) are N-terminal hotdog fold. Positions 997–1267 (HTTVATVSAS…YRALDFGLDV (271 aa)) constitute a PKS/mFAS DH domain. The Proton acceptor; for dehydratase activity role is filled by His-1027. A disordered region spans residues 1102–1130 (TAQLSSSPSDSASSLNEHHRANGQPPERA). Over residues 1106 to 1115 (SSSPSDSASS) the composition is skewed to low complexity. The C-terminal hotdog fold stretch occupies residues 1130–1267 (AHRDLIPDLA…YRALDFGLDV (138 aa)). Asp-1186 (proton donor; for dehydratase activity) is an active-site residue. 1491–1551 (AAYLITGGLG…RRRIDAIRAL (61 aa)) is an NADP(+) binding site. Positions 1491-1728 (AAYLITGGLG…DGYDVAQAVV (238 aa)) are beta-ketoacyl reductase. One can recognise a Carrier 2 domain in the interval 1759-1836 (EVRSELEQGL…SLASYLAKRV (78 aa)). Ser-1796 carries the O-(pantetheine 4'-phosphoryl)serine modification.

NADP(+) is required as a cofactor. Pantetheine 4'-phosphate serves as cofactor.

It catalyses the reaction icosanoyl-[(phenol)carboxyphthiodiolenone synthase] + 2 (S)-methylmalonyl-CoA + 3 malonyl-CoA + 5 NADPH + 10 H(+) = C32-carboxyphthiodiolenone-[(phenol)carboxyphthiodiolenone synthase] + 5 CO2 + 5 NADP(+) + 5 CoA + 2 H2O. The enzyme catalyses docosanoyl-[(phenol)carboxyphthiodiolenone synthase] + 2 (S)-methylmalonyl-CoA + 3 malonyl-CoA + 5 NADPH + 10 H(+) = C34-carboxyphthiodiolenone-[(phenol)carboxyphthiodiolenone synthase] + 5 CO2 + 5 NADP(+) + 5 CoA + 2 H2O. It carries out the reaction 17-(4-hydroxyphenyl)heptadecanoyl-[(phenol)carboxyphthiodiolenone synthase] + 2 (S)-methylmalonyl-CoA + 3 malonyl-CoA + 5 NADPH + 10 H(+) = C35-(phenol)carboxyphthiodiolenone-[(phenol)carboxyphthiodiolenone synthase] + 5 CO2 + 5 NADP(+) + 5 CoA + 2 H2O. The catalysed reaction is 19-(4-hydroxyphenyl)nonadecanoyl-[(phenol)carboxyphthiodiolenone synthase] + 2 (S)-methylmalonyl-CoA + 3 malonyl-CoA + 5 NADPH + 10 H(+) = C37-(phenol)carboxyphthiodiolenone-[(phenol)carboxyphthiodiolenone synthase] + 5 CO2 + 5 NADP(+) + 5 CoA + 2 H2O. It functions in the pathway lipid metabolism; fatty acid biosynthesis. Part of the PpsABCDE complex involved in the biosynthesis of the lipid core common to phthiocerols and phenolphthiocerols by successive additions of malonyl-CoA or methylmalonyl-CoA extender units. PpsA can accept as substrate the activated forms of either icosanoyl (C20), docosanoyl (C22) or lignoceroyl (C24) groups from FadD26, or a (4-hydroxyphenyl)-C17 or (4-hydroxyphenyl)-C19 fatty acyl from FadD29. PpsA initiates the biosynthesis and extends its substrate using a malonyl-CoA extender unit. The PpsB and PpsC proteins add the second and third malonyl-CoA extender units. PpsD adds an (R)-methylmalonyl unit and PpsE adds a second (R)-methylmalonyl unit. The incorporation of the methylmalonyl units results in formation of two branched methyl groups in the elongated product. In Mycobacterium tuberculosis (strain ATCC 25618 / H37Rv), this protein is Phenolphthiocerol/phthiocerol polyketide synthase subunit A (ppsA).